Here is a 189-residue protein sequence, read N- to C-terminus: ATP synthase subunit b (189 aa).

Residues 35–54 form a helical membrane-spanning segment; it reads LLAQMFNFLVLLILLRAVAY.

Belongs to the ATPase B chain family. In terms of assembly, F-type ATPases have 2 components, F(1) - the catalytic core - and F(0) - the membrane proton channel. F(1) has five subunits: alpha(3), beta(3), gamma(1), delta(1), epsilon(1). F(0) has three main subunits: a(1), b(2) and c(10-14). The alpha and beta chains form an alternating ring which encloses part of the gamma chain. F(1) is attached to F(0) by a central stalk formed by the gamma and epsilon chains, while a peripheral stalk is formed by the delta and b chains.

The protein resides in the cell membrane. F(1)F(0) ATP synthase produces ATP from ADP in the presence of a proton or sodium gradient. F-type ATPases consist of two structural domains, F(1) containing the extramembraneous catalytic core and F(0) containing the membrane proton channel, linked together by a central stalk and a peripheral stalk. During catalysis, ATP synthesis in the catalytic domain of F(1) is coupled via a rotary mechanism of the central stalk subunits to proton translocation. Functionally, component of the F(0) channel, it forms part of the peripheral stalk, linking F(1) to F(0). In Desulforamulus reducens (strain ATCC BAA-1160 / DSM 100696 / MI-1) (Desulfotomaculum reducens), this protein is ATP synthase subunit b.